The following is a 217-amino-acid chain: Small ribosomal subunit protein uS3 (217 aa).

The KH type-2 domain occupies 40 to 110; the sequence is IRELVNKSFT…EVYINIHEVR (71 aa).

It belongs to the universal ribosomal protein uS3 family. In terms of assembly, part of the 30S ribosomal subunit. Forms a tight complex with proteins S10 and S14.

In terms of biological role, binds the lower part of the 30S subunit head. Binds mRNA in the 70S ribosome, positioning it for translation. This chain is Small ribosomal subunit protein uS3, found in Rickettsia bellii (strain OSU 85-389).